Consider the following 192-residue polypeptide: Protein GrpE (192 aa).

Residues methionine 1 to glutamine 20 show a composition bias toward basic and acidic residues. A disordered region spans residues methionine 1 to glutamate 39. A compositionally biased stretch (acidic residues) spans valine 25–valine 34.

It belongs to the GrpE family. In terms of assembly, homodimer.

The protein resides in the cytoplasm. Participates actively in the response to hyperosmotic and heat shock by preventing the aggregation of stress-denatured proteins, in association with DnaK and GrpE. It is the nucleotide exchange factor for DnaK and may function as a thermosensor. Unfolded proteins bind initially to DnaJ; upon interaction with the DnaJ-bound protein, DnaK hydrolyzes its bound ATP, resulting in the formation of a stable complex. GrpE releases ADP from DnaK; ATP binding to DnaK triggers the release of the substrate protein, thus completing the reaction cycle. Several rounds of ATP-dependent interactions between DnaJ, DnaK and GrpE are required for fully efficient folding. In Bacillus cereus (strain ATCC 10987 / NRS 248), this protein is Protein GrpE.